Consider the following 1960-residue polypeptide: Transcription factor 20 (1960 aa).

Residues 1-18 (MQSFREQSSYHGNQQSYP) are compositionally biased toward polar residues. A disordered region spans residues 1 to 287 (MQSFREQSSY…GSNAQAYGTQ (287 aa)). The span at 42–60 (GGTGGSSGSSGSGSGGGRR) shows a compositional bias: gly residues. Arg60 carries the omega-N-methylarginine modification. The span at 61-75 (GAAAAAAAMASETSG) shows a compositional bias: low complexity. Polar residues predominate over residues 122 to 131 (QGSSFGNQYG). Positions 164–192 (SAQYQQQASSQQQQQQVQQLRQQLYQSHQ) are enriched in low complexity. Residues 193 to 219 (PLPQATGQPASSSSHLQPMQRPSTLPS) are compositionally biased toward polar residues. Low complexity predominate over residues 236-259 (QSSASSSSSSSFPSPQRFSQSGQS). Composition is skewed to polar residues over residues 260–270 (YDGSYNVNAGS) and 277–287 (VGSNAQAYGTQ). Lys304 participates in a covalent cross-link: Glycyl lysine isopeptide (Lys-Gly) (interchain with G-Cter in SUMO2). Disordered regions lie at residues 305–328 (IPQGTQQGQQQQQPQQQQHPSQHV) and 360–392 (FHQNFSPISNPSPAASVVQSPSCSSTPSPLMQT). 2 stretches are compositionally biased toward low complexity: residues 306 to 322 (PQGTQQGQQQQQPQQQQ) and 368 to 388 (SNPSPAASVVQSPSCSSTPSP). Phosphoserine occurs at positions 419 and 430. The disordered stretch occupies residues 476–748 (SDALTPQKKT…HGERKGRNEK (273 aa)). Polar residues-rich tracts occupy residues 497-508 (SCTNSEGSSQPE) and 537-547 (LSGQSTSSDTT). A phosphoserine mark is found at Ser538, Ser559, Ser574, and Ser583. At Lys602 the chain carries N6-acetyllysine. Residues 616 to 628 (RVEKPGGQDKGSQ) show a composition bias toward basic and acidic residues. Ser640 is modified (phosphoserine). Positions 665 to 677 (GNKNGDNNSNHNG) are enriched in low complexity. The span at 693–702 (TSRTEPSKSP) shows a compositional bias: polar residues. Residues Lys710, Lys733, Lys748, Lys823, Lys832, and Lys844 each participate in a glycyl lysine isopeptide (Lys-Gly) (interchain with G-Cter in SUMO2) cross-link. The segment covering 732–748 (EKGDFTGHGERKGRNEK) has biased composition (basic and acidic residues). Ser871 carries the phosphoserine modification. Glycyl lysine isopeptide (Lys-Gly) (interchain with G-Cter in SUMO2) cross-links involve residues Lys920 and Lys922. The tract at residues 920 to 1037 (KLKSQSGQIK…GDPHHMNPHM (118 aa)) is disordered. A Glycyl lysine isopeptide (Lys-Gly) (interchain with G-Cter in SUMO1); alternate cross-link involves residue Lys929. Lys929 is covalently cross-linked (Glycyl lysine isopeptide (Lys-Gly) (interchain with G-Cter in SUMO2); alternate). Residues 936-945 (SKSQASFNNK) show a composition bias toward polar residues. Residues 946–961 (KSGDHCHPPSIKHESY) show a composition bias toward basic and acidic residues. Lys957 participates in a covalent cross-link: Glycyl lysine isopeptide (Lys-Gly) (interchain with G-Cter in SUMO2). Residues Ser966 and Ser1005 each carry the phosphoserine modification. A Glycyl lysine isopeptide (Lys-Gly) (interchain with G-Cter in SUMO2) cross-link involves residue Lys1015. Omega-N-methylarginine is present on Arg1024. Position 1053 is a phosphoserine (Ser1053). Residues Lys1086, Lys1098, Lys1137, Lys1173, Lys1178, Lys1183, Lys1210, Lys1231, Lys1267, and Lys1274 each participate in a glycyl lysine isopeptide (Lys-Gly) (interchain with G-Cter in SUMO2) cross-link. 3 disordered regions span residues 1110–1142 (AAAQHRQEGPRKSPRQQQFLDRVRSPLKNDKDG), 1162–1285 (RCLM…GRLL), and 1303–1331 (SHSQDIKSIPKRDSSKDLPSPDSRNCPAV). Residues 1130-1142 (DRVRSPLKNDKDG) are compositionally biased toward basic and acidic residues. Residues 1170–1191 (LPNKGMELKHGSQKLQESCWDL) are leucine-zipper. A Nuclear localization signal motif is present at residues 1254–1268 (RRRVRSFISPIPSKR). The span at 1304–1318 (HSQDIKSIPKRDSSK) shows a compositional bias: basic and acidic residues. Ser1305 bears the Phosphoserine mark. Residue Lys1309 forms a Glycyl lysine isopeptide (Lys-Gly) (interchain with G-Cter in SUMO2) linkage. Ser1335 is subject to Phosphoserine. A Glycyl lysine isopeptide (Lys-Gly) (interchain with G-Cter in SUMO2) cross-link involves residue Lys1338. Residue Ser1361 is modified to Phosphoserine. The interval 1384–1607 (DILSLKSGPP…TKQAVPIVEP (224 aa)) is disordered. Residues Lys1389, Lys1409, Lys1428, and Lys1446 each participate in a glycyl lysine isopeptide (Lys-Gly) (interchain with G-Cter in SUMO2) cross-link. A compositionally biased stretch (basic and acidic residues) spans 1424-1451 (LHVEKPLPRSSEEWRGSVDDKVKTETHA). The segment covering 1464–1477 (MTSTTSQKPGSNQG) has biased composition (polar residues). A Glycyl lysine isopeptide (Lys-Gly) (interchain with G-Cter in SUMO2) cross-link involves residue Lys1510. The residue at position 1522 (Ser1522) is a Phosphoserine. Lys1524 is covalently cross-linked (Glycyl lysine isopeptide (Lys-Gly) (interchain with G-Cter in SUMO2)). Positions 1537-1551 (GKKKGRPIGSVNKQK) form a DNA-binding region, a.T hook. Residues 1555–1566 (QPPPPPPQPPQI) are compositionally biased toward pro residues. A Nuclear localization signal motif is present at residues 1576–1600 (KPKKQRQRRERRKPGAQPRKRKTKQ). The segment covering 1578–1599 (KKQRQRRERRKPGAQPRKRKTK) has biased composition (basic residues). Residue Lys1613 forms a Glycyl lysine isopeptide (Lys-Gly) (interchain with G-Cter in SUMO2) linkage. Disordered stretches follow at residues 1660 to 1683 (LVRGRKGQRSLTPPPSSTESKALP) and 1732 to 1839 (TLPK…PELE). Ser1669 is subject to Phosphoserine. A phosphothreonine mark is found at Thr1671, Thr1762, and Thr1764. Positions 1785–1792 (RFKRRHRS) match the Nuclear localization signal motif. Residues 1829 to 1865 (PTTSEGGPELELQIPELPLDSNEFWVHEGCILWANGI) form a C2HC pre-PHD-type; degenerate zinc finger. The segment at 1885-1933 (MKCSHCQEAGATLGCYNKGCSFRYHYPCAIDADCLLHEENFSVRCPKHK) adopts a PHD-type zinc-finger fold. The disordered stretch occupies residues 1939-1960 (PLPPLQNKTAKGSLSTEQSERG). The segment covering 1944–1960 (QNKTAKGSLSTEQSERG) has biased composition (polar residues).

As to quaternary structure, homodimer. Interacts with RNF4 and JUN. Expressed in most tissues, except in ovary and prostate. Isoform 1 is exclusively expressed in brain, heart and testis, and this form predominates in liver and kidney. Isoform 2 predominates in lung.

Its subcellular location is the nucleus. In terms of biological role, transcriptional activator that binds to the regulatory region of MMP3 and thereby controls stromelysin expression. It stimulates the activity of various transcriptional activators such as JUN, SP1, PAX6 and ETS1, suggesting a function as a coactivator. This chain is Transcription factor 20 (TCF20), found in Homo sapiens (Human).